The following is a 500-amino-acid chain: Aspartyl/glutamyl-tRNA(Asn/Gln) amidotransferase subunit B (500 aa).

This sequence belongs to the GatB/GatE family. GatB subfamily. In terms of assembly, heterotrimer of A, B and C subunits.

The catalysed reaction is L-glutamyl-tRNA(Gln) + L-glutamine + ATP + H2O = L-glutaminyl-tRNA(Gln) + L-glutamate + ADP + phosphate + H(+). It catalyses the reaction L-aspartyl-tRNA(Asn) + L-glutamine + ATP + H2O = L-asparaginyl-tRNA(Asn) + L-glutamate + ADP + phosphate + 2 H(+). In terms of biological role, allows the formation of correctly charged Asn-tRNA(Asn) or Gln-tRNA(Gln) through the transamidation of misacylated Asp-tRNA(Asn) or Glu-tRNA(Gln) in organisms which lack either or both of asparaginyl-tRNA or glutaminyl-tRNA synthetases. The reaction takes place in the presence of glutamine and ATP through an activated phospho-Asp-tRNA(Asn) or phospho-Glu-tRNA(Gln). The protein is Aspartyl/glutamyl-tRNA(Asn/Gln) amidotransferase subunit B of Rhizobium leguminosarum bv. trifolii (strain WSM2304).